Consider the following 453-residue polypeptide: Cytochrome b-c1 complex subunit 2, mitochondrial (453 aa).

The N-terminal 14 residues, Met1–Tyr14, are a transit peptide targeting the mitochondrion. Residues Lys66, Lys199, and Lys250 each carry the N6-acetyllysine modification.

Belongs to the peptidase M16 family. UQCRC2/QCR2 subfamily. In terms of assembly, component of the ubiquinol-cytochrome c oxidoreductase (cytochrome b-c1 complex, complex III, CIII), a multisubunit enzyme composed of 11 subunits. The complex is composed of 3 respiratory subunits cytochrome b, cytochrome c1 and Rieske protein UQCRFS1, 2 core protein subunits UQCRC1/QCR1 and UQCRC2/QCR2, and 6 low-molecular weight protein subunits UQCRH/QCR6, UQCRB/QCR7, UQCRQ/QCR8, UQCR10/QCR9, UQCR11/QCR10 and subunit 9, the cleavage product of Rieske protein UQCRFS1. The complex exists as an obligatory dimer and forms supercomplexes (SCs) in the inner mitochondrial membrane with NADH-ubiquinone oxidoreductase (complex I, CI) and cytochrome c oxidase (complex IV, CIV), resulting in different assemblies (supercomplex SCI(1)III(2)IV(1) and megacomplex MCI(2)III(2)IV(2)). Interacts with RAB5IF. Interacts with STMP1.

The protein resides in the mitochondrion inner membrane. Its function is as follows. Component of the ubiquinol-cytochrome c oxidoreductase, a multisubunit transmembrane complex that is part of the mitochondrial electron transport chain which drives oxidative phosphorylation. The respiratory chain contains 3 multisubunit complexes succinate dehydrogenase (complex II, CII), ubiquinol-cytochrome c oxidoreductase (cytochrome b-c1 complex, complex III, CIII) and cytochrome c oxidase (complex IV, CIV), that cooperate to transfer electrons derived from NADH and succinate to molecular oxygen, creating an electrochemical gradient over the inner membrane that drives transmembrane transport and the ATP synthase. The cytochrome b-c1 complex catalyzes electron transfer from ubiquinol to cytochrome c, linking this redox reaction to translocation of protons across the mitochondrial inner membrane, with protons being carried across the membrane as hydrogens on the quinol. In the process called Q cycle, 2 protons are consumed from the matrix, 4 protons are released into the intermembrane space and 2 electrons are passed to cytochrome c. The 2 core subunits UQCRC1/QCR1 and UQCRC2/QCR2 are homologous to the 2 mitochondrial-processing peptidase (MPP) subunits beta-MPP and alpha-MPP respectively, and they seem to have preserved their MPP processing properties. May be involved in the in situ processing of UQCRFS1 into the mature Rieske protein and its mitochondrial targeting sequence (MTS)/subunit 9 when incorporated into complex III. This Homo sapiens (Human) protein is Cytochrome b-c1 complex subunit 2, mitochondrial (UQCRC2).